The primary structure comprises 226 residues: 7-cyano-7-deazaguanine synthase (226 aa).

7 to 17 provides a ligand contact to ATP; that stretch reads LSGGMDSLVTT. Zn(2+) contacts are provided by Cys187, Cys195, Cys198, and Cys201.

Belongs to the QueC family. The cofactor is Zn(2+).

It carries out the reaction 7-carboxy-7-deazaguanine + NH4(+) + ATP = 7-cyano-7-deazaguanine + ADP + phosphate + H2O + H(+). It functions in the pathway purine metabolism; 7-cyano-7-deazaguanine biosynthesis. In terms of biological role, catalyzes the ATP-dependent conversion of 7-carboxy-7-deazaguanine (CDG) to 7-cyano-7-deazaguanine (preQ(0)). The protein is 7-cyano-7-deazaguanine synthase of Chlorobium phaeobacteroides (strain DSM 266 / SMG 266 / 2430).